The chain runs to 75 residues: Pi-hexatoxin-Hi1a (75 aa).

Disulfide bonds link cysteine 3–cysteine 18, cysteine 10–cysteine 23, cysteine 17–cysteine 33, cysteine 40–cysteine 55, cysteine 47–cysteine 60, and cysteine 54–cysteine 71. 2 Domain repeats span residues 3 to 33 (CIRK…FEVC) and 40 to 71 (CLVK…SSVC). The 2 X approximate repeats with cysteine pattern C-C-CC-C-C stretch occupies residues 3–71 (CIRKWLSCVD…KRSGNKSSVC (69 aa)).

It belongs to the psalmotoxin-1 family. Double-knot toxin subfamily. Expressed by the venom gland.

The protein localises to the secreted. Its function is as follows. This toxin potently and selectively inhibits ASIC1a (IC(50)=0.4 nM on rASIC1a and IC(50)=0.52 nM on hASIC1a), an isoform of the gene ASIC1. It incompletely inhibits ASIC1a activation in a pH-independent and slowly reversible manner (Tau(off)=14.2 minutes for rASIC1a and 31.8 minutes for hASIC1a). This toxin acts by binding to and stabilizing the closed state of the channel, thereby impeding the transition into a conducting state. This toxin may bind to the acidic pocket of ASIC1a, since mutation of a key residue of this pocket (Arg-350) abolishes the ability of the toxin to inhibit ASIC1a. In addition, it shows antiparasitic activities, since it moderately inhibits the larval development of the major pathogenic nematode of ruminants (H.contortus, IC(50)=22.9 uM). In vivo, this toxin protects the brain from neuronal injury when administered up to 8 hours after stroke onset. The polypeptide is Pi-hexatoxin-Hi1a (Hadronyche infensa (Fraser island funnel-web spider)).